Reading from the N-terminus, the 355-residue chain is Probable L-aspartate decarboxylase (355 aa).

Lys210 bears the N6-(pyridoxal phosphate)lysine mark.

This sequence belongs to the group II decarboxylase family. MfnA subfamily. It depends on pyridoxal 5'-phosphate as a cofactor.

The catalysed reaction is L-aspartate + H(+) = beta-alanine + CO2. The protein operates within cofactor biosynthesis; coenzyme A biosynthesis. Functionally, catalyzes the decarboxylation of L-aspartate to produce beta-alanine. This is Probable L-aspartate decarboxylase from Halobacterium salinarum (strain ATCC 29341 / DSM 671 / R1).